Here is a 180-residue protein sequence, read N- to C-terminus: Small ribosomal subunit protein uS4 (180 aa).

The region spanning R103–A174 is the S4 RNA-binding domain.

The protein belongs to the universal ribosomal protein uS4 family. Part of the 30S ribosomal subunit. Contacts protein S5. The interaction surface between S4 and S5 is involved in control of translational fidelity.

In terms of biological role, one of the primary rRNA binding proteins, it binds directly to 16S rRNA where it nucleates assembly of the body of the 30S subunit. Its function is as follows. With S5 and S12 plays an important role in translational accuracy. This is Small ribosomal subunit protein uS4 from Pyrococcus abyssi (strain GE5 / Orsay).